Consider the following 172-residue polypeptide: MAVKIKLQRMGKIRNAEYRVIVADARTRRSGKAIENIGIYQPKQEPSLIQIDSERAQYWLGVGAQPTEPVLALLKVTGDWQKFKGLPGAEGTLKVAEEKPSKLDLFNAALAEANNGPTIEAITEKKRKAKEEAEAKAAAEKAAEEAAAAEAAKAEEEAAKAEEADSAEESAE.

Residues 125-172 form a disordered region; the sequence is KKRKAKEEAEAKAAAEKAAEEAAAAEAAKAEEEAAKAEEADSAEESAE. Composition is skewed to basic and acidic residues over residues 129 to 144 and 152 to 163; these read AKEEAEAKAAAEKAAE and AKAEEEAAKAEE.

It belongs to the bacterial ribosomal protein bS16 family.

This chain is Small ribosomal subunit protein bS16, found in Corynebacterium aurimucosum (strain ATCC 700975 / DSM 44827 / CIP 107346 / CN-1) (Corynebacterium nigricans).